A 119-amino-acid chain; its full sequence is MPRVKTGIVRRRRHKKVLKRAKGFWGSRSKQYRNAFQTLLNAATYEYRDRRNKKRDFRRLWIQRINAGARLHGMNYSTFINGLKVAGVDLNRKVLADIAAREPEAFQVLVNTAKGARNG.

Belongs to the bacterial ribosomal protein bL20 family.

Binds directly to 23S ribosomal RNA and is necessary for the in vitro assembly process of the 50S ribosomal subunit. It is not involved in the protein synthesizing functions of that subunit. The polypeptide is Large ribosomal subunit protein bL20 (Deinococcus geothermalis (strain DSM 11300 / CIP 105573 / AG-3a)).